A 561-amino-acid chain; its full sequence is Putative transport protein YbjL (561 aa).

Transmembrane regions (helical) follow at residues 8–28 (LLNGNYILLLFVVLALGLCLG), 32–52 (LGSVQLGNSIGVLVVSLLLGQ), 66–86 (FMLFIFCVGVEAGPNFFSIFF), 94–114 (MLALVMVGSALLIALGLGKLF), and 158–178 (NLSLGYALTYLIGLVSLIVGA). 2 RCK C-terminal domains span residues 200 to 288 (RGLD…SFRN) and 292 to 373 (VFDR…RIGF). The next 5 membrane-spanning stretches (helical) occupy residues 383–403 (LLAFCAFFIIGLMIGMITFQF), 406–426 (FSFGIGNAAGLLFAGIMLGFL), 447–467 (FGLMVFMAGVGLSAGSGISNG), 475–495 (MLIAGLVVSLVPVVICFLFGA), and 540–560 (AIANVLLTLAGTLIVIIWPGL).

This sequence belongs to the AAE transporter (TC 2.A.81) family. YbjL subfamily.

It localises to the cell membrane. The sequence is that of Putative transport protein YbjL from Salmonella dublin (strain CT_02021853).